The sequence spans 252 residues: Protein PF0476 (252 aa).

This sequence belongs to the CinA family.

The polypeptide is Protein PF0476 (Pyrococcus furiosus (strain ATCC 43587 / DSM 3638 / JCM 8422 / Vc1)).